The primary structure comprises 292 residues: MAKISAAQVKELRDKTGVGMMDAKKALVETEGDMEKAVDVLREKGVAKAEKKSGRVAAEGIAAVAIKDNKAAIVEINCETDSVASTDKFKNLVTEVADKIAEEEPASVDDALALKTANGTVKDDVIETTQVTGEKISLRRFQVVEKGADQSFGSYIHNGGQIAALVVLDGADSATAKDVAMHVAAINPEYVNREQVPADRLAHEKDVLVKEALNEGKPEKIVEKMVEGRLNKWLSEISLDDQEFVKDSDQTVAHFVESKGGKVSSFIRFEVGEGIEKKADNFIDEVMNQIKD.

The segment at 80-83 (TDSV) is involved in Mg(2+) ion dislocation from EF-Tu.

It belongs to the EF-Ts family.

The protein resides in the cytoplasm. Functionally, associates with the EF-Tu.GDP complex and induces the exchange of GDP to GTP. It remains bound to the aminoacyl-tRNA.EF-Tu.GTP complex up to the GTP hydrolysis stage on the ribosome. This is Elongation factor Ts from Lactiplantibacillus plantarum (strain ATCC BAA-793 / NCIMB 8826 / WCFS1) (Lactobacillus plantarum).